A 351-amino-acid polypeptide reads, in one-letter code: UDP-N-acetylglucosamine--N-acetylmuramyl-(pentapeptide) pyrophosphoryl-undecaprenol N-acetylglucosamine transferase (351 aa).

Residues 12 to 14, N124, R160, S188, I239, 258 to 263, and Q283 each bind UDP-N-acetyl-alpha-D-glucosamine; these read TGG and ALTVCE.

It belongs to the glycosyltransferase 28 family. MurG subfamily.

The protein localises to the cell inner membrane. The enzyme catalyses di-trans,octa-cis-undecaprenyl diphospho-N-acetyl-alpha-D-muramoyl-L-alanyl-D-glutamyl-meso-2,6-diaminopimeloyl-D-alanyl-D-alanine + UDP-N-acetyl-alpha-D-glucosamine = di-trans,octa-cis-undecaprenyl diphospho-[N-acetyl-alpha-D-glucosaminyl-(1-&gt;4)]-N-acetyl-alpha-D-muramoyl-L-alanyl-D-glutamyl-meso-2,6-diaminopimeloyl-D-alanyl-D-alanine + UDP + H(+). It functions in the pathway cell wall biogenesis; peptidoglycan biosynthesis. In terms of biological role, cell wall formation. Catalyzes the transfer of a GlcNAc subunit on undecaprenyl-pyrophosphoryl-MurNAc-pentapeptide (lipid intermediate I) to form undecaprenyl-pyrophosphoryl-MurNAc-(pentapeptide)GlcNAc (lipid intermediate II). The protein is UDP-N-acetylglucosamine--N-acetylmuramyl-(pentapeptide) pyrophosphoryl-undecaprenol N-acetylglucosamine transferase of Actinobacillus pleuropneumoniae serotype 7 (strain AP76).